A 406-amino-acid chain; its full sequence is Tyrosine--tRNA ligase (406 aa).

Tyrosine 35 is a binding site for L-tyrosine. The short motif at 40–49 (PTADSLHVGH) is the 'HIGH' region element. 2 residues coordinate L-tyrosine: tyrosine 168 and glutamine 172. The short motif at 228–232 (KMGKT) is the 'KMSKS' region element. Lysine 231 provides a ligand contact to ATP. An S4 RNA-binding domain is found at 340–404 (AELLDILVEA…RGKKNYNKIV (65 aa)).

Belongs to the class-I aminoacyl-tRNA synthetase family. TyrS type 1 subfamily. In terms of assembly, homodimer.

It is found in the cytoplasm. The catalysed reaction is tRNA(Tyr) + L-tyrosine + ATP = L-tyrosyl-tRNA(Tyr) + AMP + diphosphate + H(+). Catalyzes the attachment of tyrosine to tRNA(Tyr) in a two-step reaction: tyrosine is first activated by ATP to form Tyr-AMP and then transferred to the acceptor end of tRNA(Tyr). This Clostridium perfringens (strain 13 / Type A) protein is Tyrosine--tRNA ligase.